Reading from the N-terminus, the 1334-residue chain is CRISPR-associated endonuclease Cas9 (1334 aa).

The active-site For RuvC-like nuclease domain is Asp10. The Mn(2+) site is built by Asp10, Glu765, and Glu769. One can recognise an HNH Cas9-type domain in the interval 773 to 924 (TGKGKNNSRP…DKARFIHRQL (152 aa)). Catalysis depends on His843, which acts as the Proton acceptor for HNH nuclease domain. His986 is a Mn(2+) binding site.

The protein belongs to the CRISPR-associated protein Cas9 family. Subtype II-A subfamily. Monomer. Binds crRNA and tracrRNA. It depends on Mg(2+) as a cofactor.

Its function is as follows. CRISPR (clustered regularly interspaced short palindromic repeat) is an adaptive immune system that provides protection against mobile genetic elements (viruses, transposable elements and conjugative plasmids). CRISPR clusters contain spacers, sequences complementary to antecedent mobile elements, and target invading nucleic acids. CRISPR clusters are transcribed and processed into CRISPR RNA (crRNA). In type II CRISPR systems correct processing of pre-crRNA requires a trans-encoded small RNA (tracrRNA), endogenous ribonuclease 3 (rnc) and this protein. The tracrRNA serves as a guide for ribonuclease 3-aided processing of pre-crRNA. Subsequently Cas9/crRNA/tracrRNA endonucleolytically cleaves linear or circular dsDNA target complementary to the spacer; Cas9 is inactive in the absence of the 2 guide RNAs (gRNA). Cas9 recognizes the protospacer adjacent motif (PAM) in the CRISPR repeat sequences to help distinguish self versus nonself, as targets within the bacterial CRISPR locus do not have PAMs. PAM recognition is also required for catalytic activity. The sequence is that of CRISPR-associated endonuclease Cas9 from Listeria innocua serovar 6a (strain ATCC BAA-680 / CLIP 11262).